We begin with the raw amino-acid sequence, 329 residues long: DNA-directed RNA polymerase subunit alpha (329 aa).

Residues 1 to 235 (MLGSVTDFLK…EQLEAFVDLR (235 aa)) form an alpha N-terminal domain (alpha-NTD) region. Positions 249 to 329 (FDPILLRPVD…NWPPASIADE (81 aa)) are alpha C-terminal domain (alpha-CTD).

This sequence belongs to the RNA polymerase alpha chain family. In terms of assembly, homodimer. The RNAP catalytic core consists of 2 alpha, 1 beta, 1 beta' and 1 omega subunit. When a sigma factor is associated with the core the holoenzyme is formed, which can initiate transcription.

It catalyses the reaction RNA(n) + a ribonucleoside 5'-triphosphate = RNA(n+1) + diphosphate. DNA-dependent RNA polymerase catalyzes the transcription of DNA into RNA using the four ribonucleoside triphosphates as substrates. In Aeromonas hydrophila subsp. hydrophila (strain ATCC 7966 / DSM 30187 / BCRC 13018 / CCUG 14551 / JCM 1027 / KCTC 2358 / NCIMB 9240 / NCTC 8049), this protein is DNA-directed RNA polymerase subunit alpha.